A 376-amino-acid polypeptide reads, in one-letter code: Dihydroorotate dehydrogenase (quinone) (376 aa).

Residues 74-78 and T98 contribute to the FMN site; that span reads AGFDK. Position 78 (K78) interacts with substrate. 123–127 is a binding site for substrate; that stretch reads NRMGF. Residues N155 and N188 each contribute to the FMN site. Residue N188 participates in substrate binding. S191 (nucleophile) is an active-site residue. N193 is a binding site for substrate. FMN is bound by residues K226 and T254. 255–256 serves as a coordination point for substrate; that stretch reads NT. Residues G284, G313, and 334 to 335 each bind FMN; that span reads YT.

Belongs to the dihydroorotate dehydrogenase family. Type 2 subfamily. As to quaternary structure, monomer. The cofactor is FMN.

It localises to the cell membrane. The catalysed reaction is (S)-dihydroorotate + a quinone = orotate + a quinol. It functions in the pathway pyrimidine metabolism; UMP biosynthesis via de novo pathway; orotate from (S)-dihydroorotate (quinone route): step 1/1. Functionally, catalyzes the conversion of dihydroorotate to orotate with quinone as electron acceptor. In Nostoc punctiforme (strain ATCC 29133 / PCC 73102), this protein is Dihydroorotate dehydrogenase (quinone).